A 180-amino-acid chain; its full sequence is ADP-ribosylation factor 1 (180 aa).

The N-myristoyl glycine moiety is linked to residue G2. GTP contacts are provided by residues 24–31 (GLDAAGKT), 67–71 (DVGGQ), and 126–129 (NKQD).

The protein belongs to the small GTPase superfamily. Arf family.

The protein localises to the golgi apparatus. It catalyses the reaction GTP + H2O = GDP + phosphate + H(+). Its function is as follows. GTP-binding protein involved in protein trafficking; may modulate vesicle budding and uncoating within the Golgi apparatus. The chain is ADP-ribosylation factor 1 (arf1) from Schizosaccharomyces pombe (strain 972 / ATCC 24843) (Fission yeast).